Reading from the N-terminus, the 152-residue chain is Xanthine-guanine phosphoribosyltransferase (152 aa).

Residues 37 to 38, R69, and 88 to 96 contribute to the 5-phospho-alpha-D-ribose 1-diphosphate site; these read RG and DDLVDTGGT. Residue R69 coordinates GMP. D89 is a binding site for Mg(2+). Residues D92 and I135 each coordinate guanine. Positions 92 and 135 each coordinate xanthine. GMP is bound by residues 92–96 and 134–135; these read DTGGT and WI.

Belongs to the purine/pyrimidine phosphoribosyltransferase family. XGPT subfamily. Homotetramer. The cofactor is Mg(2+).

The protein localises to the cell inner membrane. It catalyses the reaction GMP + diphosphate = guanine + 5-phospho-alpha-D-ribose 1-diphosphate. The catalysed reaction is XMP + diphosphate = xanthine + 5-phospho-alpha-D-ribose 1-diphosphate. It carries out the reaction IMP + diphosphate = hypoxanthine + 5-phospho-alpha-D-ribose 1-diphosphate. Its pathway is purine metabolism; GMP biosynthesis via salvage pathway; GMP from guanine: step 1/1. It participates in purine metabolism; XMP biosynthesis via salvage pathway; XMP from xanthine: step 1/1. Functionally, purine salvage pathway enzyme that catalyzes the transfer of the ribosyl-5-phosphate group from 5-phospho-alpha-D-ribose 1-diphosphate (PRPP) to the N9 position of the 6-oxopurines guanine and xanthine to form the corresponding ribonucleotides GMP (guanosine 5'-monophosphate) and XMP (xanthosine 5'-monophosphate), with the release of PPi. To a lesser extent, also acts on hypoxanthine. The sequence is that of Xanthine-guanine phosphoribosyltransferase from Enterobacter sp. (strain 638).